Here is a 132-residue protein sequence, read N- to C-terminus: Agouti-signaling protein (132 aa).

Positions 1–22 (MDVTRLLLATLLVFLCFFTAYS) are cleaved as a signal peptide. Residue N39 is glycosylated (N-linked (GlcNAc...) asparagine). The disordered stretch occupies residues 61–87 (QISRKEAEKKRSSKKEASMKKVARPRT). Positions 63-79 (SRKEAEKKRSSKKEASM) are enriched in basic and acidic residues. Cystine bridges form between C93–C108, C100–C114, C107–C125, C111–C132, and C116–C123. The Agouti domain maps to 93-132 (CVATRDSCKSPAPACCDPCASCQCRFFRSACSCRVLSLNC).

Its subcellular location is the secreted. Its function is as follows. Involved in the regulation of melanogenesis. The binding of ASP to MC1R precludes alpha-MSH initiated signaling and thus blocks production of cAMP, leading to a down-regulation of eumelanogenesis (brown/black pigment) and thus increasing synthesis of pheomelanin (yellow/red pigment). The chain is Agouti-signaling protein (ASIP) from Macaca nigra (Celebes black macaque).